Reading from the N-terminus, the 363-residue chain is Peptide chain release factor 2 (363 aa).

Glutamine 251 carries the post-translational modification N5-methylglutamine.

It belongs to the prokaryotic/mitochondrial release factor family. Methylated by PrmC. Methylation increases the termination efficiency of RF2.

It is found in the cytoplasm. Peptide chain release factor 2 directs the termination of translation in response to the peptide chain termination codons UGA and UAA. The protein is Peptide chain release factor 2 of Helicobacter pylori (strain HPAG1).